The sequence spans 404 residues: Acetate kinase (404 aa).

Mg(2+) is bound at residue Asn-7. Lys-14 contacts ATP. Residue Arg-95 participates in substrate binding. The active-site Proton donor/acceptor is the Asp-152. Residues 212–216 (HLGNG), 286–288 (DMR), and 334–338 (GIGEN) each bind ATP. Glu-388 contacts Mg(2+).

This sequence belongs to the acetokinase family. As to quaternary structure, homodimer. The cofactor is Mg(2+). It depends on Mn(2+) as a cofactor.

Its subcellular location is the cytoplasm. It carries out the reaction acetate + ATP = acetyl phosphate + ADP. It functions in the pathway metabolic intermediate biosynthesis; acetyl-CoA biosynthesis; acetyl-CoA from acetate: step 1/2. Functionally, catalyzes the formation of acetyl phosphate from acetate and ATP. Can also catalyze the reverse reaction. The chain is Acetate kinase from Nitratidesulfovibrio vulgaris (strain DSM 19637 / Miyazaki F) (Desulfovibrio vulgaris).